We begin with the raw amino-acid sequence, 35 residues long: uncharacterized protein (35 aa).

This is an uncharacterized protein from Bacillus subtilis (strain 168).